Consider the following 306-residue polypeptide: MNEFINFDEISRKTWQNLYNTSIAPLTHDELESIRSLNDEISLQDVEDVYLPLIHLLRLYKKNLEDMSYSKGLFLQKIVKTPPLIIGISGSVAVGKSTTARLLQLLLSRAFPKLTVDLVTTDGFLYTTNDLKNMGILDRKGFPESYDMEKLTSFLYHVKNGEKFEVPIYSHETYDILPNQSQIIDSPDILIVEGINVLQNPQNQLLYISDFYDFSIYVDADEKLIEKWYLERFDSLLKLAKYDQTNFYHQFTKMPEDKVINLAREIWARVNRVNLREYIEPTRNRAEIILHKTENHYIDKIYLKKF.

Residue 90–97 (GSVAVGKS) participates in ATP binding.

Belongs to the prokaryotic pantothenate kinase family.

It is found in the cytoplasm. The enzyme catalyses (R)-pantothenate + ATP = (R)-4'-phosphopantothenate + ADP + H(+). It functions in the pathway cofactor biosynthesis; coenzyme A biosynthesis; CoA from (R)-pantothenate: step 1/5. In Lactococcus lactis subsp. lactis (strain IL1403) (Streptococcus lactis), this protein is Pantothenate kinase (coaA).